Consider the following 265-residue polypeptide: MSIRVAIAGARGKMGAEAVHTVMKHDKMELVAVLDYKEVGKTLADLDMFPASYTVPIFTEMHDLVEATSPDVLVDLTNPHSVYNHTKEALNLNVRPVIGTTGFTDAQLEELSTIAKEKELGCIIAPNFAIGAILMMKFAKEAAKYLPDVEIIEMHHDHKLDAPSGTAVKTAQLIQEARTQKTQGHPEEKETIEGARGGDFDGMRIHSVRLPGLVAHQQVLFGGDGQLLTIRHDSLNRNSFMSGIAFCVEEVMKMDQLVYGLENII.

Residue 9-14 (GARGKM) participates in NAD(+) binding. K37 is a binding site for NADP(+). NAD(+) is bound by residues 99-101 (GTT) and 125-128 (APNF). The active-site Proton donor/acceptor is the H155. (S)-2,3,4,5-tetrahydrodipicolinate is bound at residue H156. K159 acts as the Proton donor in catalysis. Position 165 to 166 (165 to 166 (GT)) interacts with (S)-2,3,4,5-tetrahydrodipicolinate.

This sequence belongs to the DapB family.

It is found in the cytoplasm. The catalysed reaction is (S)-2,3,4,5-tetrahydrodipicolinate + NAD(+) + H2O = (2S,4S)-4-hydroxy-2,3,4,5-tetrahydrodipicolinate + NADH + H(+). It catalyses the reaction (S)-2,3,4,5-tetrahydrodipicolinate + NADP(+) + H2O = (2S,4S)-4-hydroxy-2,3,4,5-tetrahydrodipicolinate + NADPH + H(+). It functions in the pathway amino-acid biosynthesis; L-lysine biosynthesis via DAP pathway; (S)-tetrahydrodipicolinate from L-aspartate: step 4/4. Functionally, catalyzes the conversion of 4-hydroxy-tetrahydrodipicolinate (HTPA) to tetrahydrodipicolinate. The polypeptide is 4-hydroxy-tetrahydrodipicolinate reductase (Lysinibacillus sphaericus (strain C3-41)).